Reading from the N-terminus, the 402-residue chain is 4-hydroxy-3-methylbut-2-enyl diphosphate reductase (402 aa).

C66 contributes to the [4Fe-4S] cluster binding site. Residue H96 coordinates (2E)-4-hydroxy-3-methylbut-2-enyl diphosphate. A dimethylallyl diphosphate-binding site is contributed by H96. H96 provides a ligand contact to isopentenyl diphosphate. C157 is a [4Fe-4S] cluster binding site. H185 contacts (2E)-4-hydroxy-3-methylbut-2-enyl diphosphate. A dimethylallyl diphosphate-binding site is contributed by H185. Position 185 (H185) interacts with isopentenyl diphosphate. E187 serves as the catalytic Proton donor. T250 is a binding site for (2E)-4-hydroxy-3-methylbut-2-enyl diphosphate. Residue C288 coordinates [4Fe-4S] cluster. (2E)-4-hydroxy-3-methylbut-2-enyl diphosphate is bound by residues S317, S318, N319, and S379. S317, S318, N319, and S379 together coordinate dimethylallyl diphosphate. Isopentenyl diphosphate contacts are provided by S317, S318, N319, and S379.

Belongs to the IspH family. It depends on [4Fe-4S] cluster as a cofactor.

The catalysed reaction is isopentenyl diphosphate + 2 oxidized [2Fe-2S]-[ferredoxin] + H2O = (2E)-4-hydroxy-3-methylbut-2-enyl diphosphate + 2 reduced [2Fe-2S]-[ferredoxin] + 2 H(+). It catalyses the reaction dimethylallyl diphosphate + 2 oxidized [2Fe-2S]-[ferredoxin] + H2O = (2E)-4-hydroxy-3-methylbut-2-enyl diphosphate + 2 reduced [2Fe-2S]-[ferredoxin] + 2 H(+). Its pathway is isoprenoid biosynthesis; dimethylallyl diphosphate biosynthesis; dimethylallyl diphosphate from (2E)-4-hydroxy-3-methylbutenyl diphosphate: step 1/1. It participates in isoprenoid biosynthesis; isopentenyl diphosphate biosynthesis via DXP pathway; isopentenyl diphosphate from 1-deoxy-D-xylulose 5-phosphate: step 6/6. Functionally, catalyzes the conversion of 1-hydroxy-2-methyl-2-(E)-butenyl 4-diphosphate (HMBPP) into a mixture of isopentenyl diphosphate (IPP) and dimethylallyl diphosphate (DMAPP). Acts in the terminal step of the DOXP/MEP pathway for isoprenoid precursor biosynthesis. The chain is 4-hydroxy-3-methylbut-2-enyl diphosphate reductase from Microcystis aeruginosa (strain NIES-843 / IAM M-2473).